Reading from the N-terminus, the 1031-residue chain is Protein translocase subunit SecA (1031 aa).

ATP-binding positions include Q143, 161-165 (GEGKT), and D662. C1015, C1017, C1026, and C1027 together coordinate Zn(2+).

The protein belongs to the SecA family. As to quaternary structure, monomer and homodimer. Part of the essential Sec protein translocation apparatus which comprises SecA, SecYEG and auxiliary proteins SecDF. Other proteins may also be involved. The cofactor is Zn(2+).

The protein resides in the cell inner membrane. It is found in the cytoplasm. The catalysed reaction is ATP + H2O + cellular proteinSide 1 = ADP + phosphate + cellular proteinSide 2.. Functionally, part of the Sec protein translocase complex. Interacts with the SecYEG preprotein conducting channel. Has a central role in coupling the hydrolysis of ATP to the transfer of proteins into and across the cell membrane, serving as an ATP-driven molecular motor driving the stepwise translocation of polypeptide chains across the membrane. This Chlorobaculum tepidum (strain ATCC 49652 / DSM 12025 / NBRC 103806 / TLS) (Chlorobium tepidum) protein is Protein translocase subunit SecA.